Reading from the N-terminus, the 566-residue chain is Interleukin-1 receptor-like 1 (566 aa).

An N-terminal signal peptide occupies residues 1–26 (MIGKWRMGLWALAILTVPMYFIVTEG). 3 consecutive Ig-like C2-type domains span residues 27–109 (RKTS…LNVT), 120–207 (PDYM…RSFT), and 217–323 (PVIT…VRLR). At 27–331 (RKTSWGLENE…LRRKQPIDHQ (305 aa)) the chain is on the extracellular side. An intrachain disulfide couples Cys-42 to Cys-93. N-linked (GlcNAc...) asparagine glycosylation is found at Asn-107, Asn-146, and Asn-194. Intrachain disulfides connect Cys-117–Cys-157 and Cys-139–Cys-187. Residues 204 to 216 (RSFTVEEKGFSTF) are flexible linker. 3 N-linked (GlcNAc...) asparagine glycosylation sites follow: Asn-225, Asn-258, and Asn-277. 2 cysteine pairs are disulfide-bonded: Cys-240–Cys-307 and Cys-243–Cys-286. A Glycyl lysine isopeptide (Lys-Gly) (interchain with G-Cter in ubiquitin) cross-link involves residue Lys-325. The chain crosses the membrane as a helical span at residues 332-354 (STYYIVAGCSLLLMFINVLVIVL). Topologically, residues 355-566 (KVFWIEVALF…GKVCLDLKHF (212 aa)) are cytoplasmic. The TIR domain occupies 379–539 (KLYDAYIIYP…KFWKHVRYQM (161 aa)). Ser-441 carries the post-translational modification Phosphoserine. Glu-465 is a catalytic residue.

It belongs to the interleukin-1 receptor family. In terms of assembly, interacts with MYD88, IRAK1, IRAK4, and TRAF6. Bound to its ligand IL-33, interacts with IL1RAP to form the minimal interleukin-33 signaling complex with a 1:1:1 stoichiometry. Interacts with KIT (bound to KITLG/SCF). A mast cell-specific KITLG/SCF-induced interleukin-33 signaling complex contains IL1RL1, IL1RAP, KIT and MYD88. Interacts with TMED1. Phosphorylated by GSK3B at Ser-441; leading to proteasomal degradation. Post-translationally, ubiquitinated at Lys-325 in a FBXL19-mediated manner; leading to proteasomal degradation. Ubiquitination by TRAF6 via 'Lys-27'-linked polyubiquitination and deubiquitination by USP38 serves as a critical regulatory mechanism for fine-tuning IL1RL1-mediated inflammatory response. As to expression, isoform A is detected in spleen, lung, bone marrow and lymh node. Isoform B is predominant in fibroblasts.

The protein localises to the cell membrane. The protein resides in the secreted. The enzyme catalyses NAD(+) + H2O = ADP-D-ribose + nicotinamide + H(+). Its function is as follows. Receptor for interleukin-33 (IL-33) which plays crucial roles in innate and adaptive immunity, contributing to tissue homeostasis and responses to environmental stresses together with coreceptor IL1RAP. Its stimulation recruits MYD88, IRAK1, IRAK4, and TRAF6, followed by phosphorylation of MAPK3/ERK1 and/or MAPK1/ERK2, MAPK14, and MAPK8. Possibly involved in helper T-cell function. Upon tissue injury, induces UCP2-dependent mitochondrial rewiring that attenuates the generation of reactive oxygen species and preserves the integrity of Krebs cycle required for persistent production of itaconate and subsequent GATA3-dependent differentiation of inflammation-resolving alternatively activated macrophages. In terms of biological role, inhibits IL-33 signaling. The polypeptide is Interleukin-1 receptor-like 1 (Il1rl1) (Rattus norvegicus (Rat)).